The chain runs to 152 residues: UPF0266 membrane protein YobD (152 aa).

3 helical membrane passes run 6 to 26 (LLLILFIAALLAYALYDQFIM), 45 to 65 (VDSVIFVGLVAILIYNNVTSH), and 67 to 87 (AQMTTWLLSALALMGFYIFWI).

This sequence belongs to the UPF0266 family.

Its subcellular location is the cell inner membrane. In Salmonella paratyphi C (strain RKS4594), this protein is UPF0266 membrane protein YobD.